The following is a 73-amino-acid chain: Protein SlyX homolog (73 aa).

The protein belongs to the SlyX family.

This is Protein SlyX homolog from Actinobacillus pleuropneumoniae serotype 5b (strain L20).